Consider the following 113-residue polypeptide: ATP-dependent Clp protease adapter protein ClpS (113 aa).

The segment covering 1–11 has biased composition (pro residues); sequence MTRPTIPPGPP. Disordered regions lie at residues 1-24 and 92-113; these read MTRPTIPPGPPGAEGRTQTLERTE and TAHAQREGHPLRVVAEPESEGE.

The protein belongs to the ClpS family. As to quaternary structure, binds to the N-terminal domain of the chaperone ClpA.

Functionally, involved in the modulation of the specificity of the ClpAP-mediated ATP-dependent protein degradation. In Deinococcus radiodurans (strain ATCC 13939 / DSM 20539 / JCM 16871 / CCUG 27074 / LMG 4051 / NBRC 15346 / NCIMB 9279 / VKM B-1422 / R1), this protein is ATP-dependent Clp protease adapter protein ClpS.